The sequence spans 258 residues: DNA repair protein RecO (258 aa).

This sequence belongs to the RecO family.

Involved in DNA repair and RecF pathway recombination. In Oceanobacillus iheyensis (strain DSM 14371 / CIP 107618 / JCM 11309 / KCTC 3954 / HTE831), this protein is DNA repair protein RecO.